Here is a 232-residue protein sequence, read N- to C-terminus: Uracil phosphoribosyltransferase (232 aa).

38–42 (KGLVK) lines the GTP pocket. Residues Arg87, Arg112, and 140–148 (DPMIATGST) contribute to the 5-phospho-alpha-D-ribose 1-diphosphate site. Residues Ile204 and 209-211 (GDA) contribute to the uracil site. Asp210 is a binding site for 5-phospho-alpha-D-ribose 1-diphosphate.

Belongs to the UPRTase family. Requires Mg(2+) as cofactor.

The enzyme catalyses UMP + diphosphate = 5-phospho-alpha-D-ribose 1-diphosphate + uracil. Its pathway is pyrimidine metabolism; UMP biosynthesis via salvage pathway; UMP from uracil: step 1/1. Allosterically activated by GTP. In terms of biological role, catalyzes the conversion of uracil and 5-phospho-alpha-D-ribose 1-diphosphate (PRPP) to UMP and diphosphate. In Pyrococcus furiosus (strain ATCC 43587 / DSM 3638 / JCM 8422 / Vc1), this protein is Uracil phosphoribosyltransferase.